We begin with the raw amino-acid sequence, 498 residues long: Probable malate:quinone oxidoreductase (498 aa).

Belongs to the MQO family. FAD is required as a cofactor.

It carries out the reaction (S)-malate + a quinone = a quinol + oxaloacetate. The protein operates within carbohydrate metabolism; tricarboxylic acid cycle; oxaloacetate from (S)-malate (quinone route): step 1/1. The chain is Probable malate:quinone oxidoreductase from Granulibacter bethesdensis (strain ATCC BAA-1260 / CGDNIH1).